We begin with the raw amino-acid sequence, 418 residues long: AP-3 complex subunit mu-1 (418 aa).

In terms of domain architecture, MHD spans 176–417 (NNEAYFDVVE…VTKAGKFQVR (242 aa)).

It belongs to the adaptor complexes medium subunit family. In terms of assembly, adaptor protein complex 3 (AP-3) is a heterotetramer composed of two large adaptins (delta-type subunit AP3D1 and beta-type subunit AP3B1 or AP3B2), a medium adaptin (mu-type subunit AP3M1 or AP3M2) and a small adaptin (sigma-type subunit APS1 or AP3S2). Interacts with AGAP1. AP-3 associates with the BLOC-1 complex.

Its subcellular location is the golgi apparatus. The protein localises to the cytoplasmic vesicle membrane. Functionally, part of the AP-3 complex, an adaptor-related complex which is not clathrin-associated. The complex is associated with the Golgi region as well as more peripheral structures. It facilitates the budding of vesicles from the Golgi membrane and may be directly involved in trafficking to lysosomes. In concert with the BLOC-1 complex, AP-3 is required to target cargos into vesicles assembled at cell bodies for delivery into neurites and nerve terminals. This is AP-3 complex subunit mu-1 (AP3M1) from Bos taurus (Bovine).